The following is a 354-amino-acid chain: Protein FAM181A (354 aa).

2 stretches are compositionally biased toward basic and acidic residues: residues 1-14 (MPLE…ERND) and 129-142 (YLKR…RRLL). Disordered regions lie at residues 1-35 (MPLE…KQVS), 117-160 (LPRG…CKEK), and 172-193 (AKEQ…VPMR).

Belongs to the FAM181 family.

The sequence is that of Protein FAM181A (FAM181A) from Homo sapiens (Human).